Reading from the N-terminus, the 602-residue chain is Arp2/3 complex-activating protein rickA (602 aa).

3 disordered regions span residues 307–484 (SSLA…AGPK), 516–535 (VEFD…KPVQ), and 555–602 (MSDS…SFVK). Positions 318 to 442 (TPPPPLPGNN…IPPPPPPPMA (125 aa)) are enriched in pro residues. 2 WH2 domains span residues 472–489 (DTSD…LRKV) and 499–516 (SRDL…LKKV). The span at 475 to 484 (DLMREIAGPK) shows a compositional bias: basic and acidic residues. Positions 537 to 570 (VNKLSGVASILARRVVMEMSDSSGSESDSGNWSD) are central and acidic domains. Positions 555–566 (MSDSSGSESDSG) are enriched in low complexity. Basic residues predominate over residues 578–590 (KTLKTKRERRKIL). Over residues 591–602 (NNRNSQKPSFVK) the composition is skewed to polar residues.

Homodimer.

It localises to the cell surface. In terms of biological role, recruits and activates the Arp2/3 complex, which in turn leads to actin polymerization, promoting Rickettsia motility during infection. In Rickettsia montanensis, this protein is Arp2/3 complex-activating protein rickA (rickA).